Here is a 78-residue protein sequence, read N- to C-terminus: Translational regulator CsrA (78 aa).

The protein belongs to the CsrA/RsmA family. Homodimer; the beta-strands of each monomer intercalate to form a hydrophobic core, while the alpha-helices form wings that extend away from the core.

It is found in the cytoplasm. Its function is as follows. A translational regulator that binds mRNA to regulate translation initiation and/or mRNA stability. Usually binds in the 5'-UTR at or near the Shine-Dalgarno sequence preventing ribosome-binding, thus repressing translation. Its main target seems to be the major flagellin gene, while its function is anatagonized by FliW. The sequence is that of Translational regulator CsrA from Oleidesulfovibrio alaskensis (strain ATCC BAA-1058 / DSM 17464 / G20) (Desulfovibrio alaskensis).